The chain runs to 126 residues: Holo-[acyl-carrier-protein] synthase (126 aa).

Residues aspartate 9 and glutamate 58 each contribute to the Mg(2+) site.

The protein belongs to the P-Pant transferase superfamily. AcpS family. The cofactor is Mg(2+).

Its subcellular location is the cytoplasm. The catalysed reaction is apo-[ACP] + CoA = holo-[ACP] + adenosine 3',5'-bisphosphate + H(+). In terms of biological role, transfers the 4'-phosphopantetheine moiety from coenzyme A to a Ser of acyl-carrier-protein. This chain is Holo-[acyl-carrier-protein] synthase, found in Aliivibrio fischeri (strain MJ11) (Vibrio fischeri).